We begin with the raw amino-acid sequence, 570 residues long: Sulfite reductase [NADPH] hemoprotein beta-component (570 aa).

Residues Cys-434, Cys-440, Cys-479, and Cys-483 each contribute to the [4Fe-4S] cluster site. A siroheme-binding site is contributed by Cys-483.

Belongs to the nitrite and sulfite reductase 4Fe-4S domain family. In terms of assembly, alpha(8)-beta(8). The alpha component is a flavoprotein, the beta component is a hemoprotein. It depends on siroheme as a cofactor. [4Fe-4S] cluster serves as cofactor.

It catalyses the reaction hydrogen sulfide + 3 NADP(+) + 3 H2O = sulfite + 3 NADPH + 4 H(+). The protein operates within sulfur metabolism; hydrogen sulfide biosynthesis; hydrogen sulfide from sulfite (NADPH route): step 1/1. Its function is as follows. Component of the sulfite reductase complex that catalyzes the 6-electron reduction of sulfite to sulfide. This is one of several activities required for the biosynthesis of L-cysteine from sulfate. This is Sulfite reductase [NADPH] hemoprotein beta-component from Escherichia coli O127:H6 (strain E2348/69 / EPEC).